Here is a 428-residue protein sequence, read N- to C-terminus: 3-phosphoshikimate 1-carboxyvinyltransferase (428 aa).

3-phosphoshikimate-binding residues include K23, S24, and R28. K23 contacts phosphoenolpyruvate. Residues G97 and R125 each contribute to the phosphoenolpyruvate site. 3-phosphoshikimate contacts are provided by S170, S171, Q172, S198, D314, N337, and K341. Q172 serves as a coordination point for phosphoenolpyruvate. The active-site Proton acceptor is D314. The phosphoenolpyruvate site is built by R345, R387, and K412.

Belongs to the EPSP synthase family. Monomer.

The protein resides in the cytoplasm. It catalyses the reaction 3-phosphoshikimate + phosphoenolpyruvate = 5-O-(1-carboxyvinyl)-3-phosphoshikimate + phosphate. It participates in metabolic intermediate biosynthesis; chorismate biosynthesis; chorismate from D-erythrose 4-phosphate and phosphoenolpyruvate: step 6/7. In terms of biological role, catalyzes the transfer of the enolpyruvyl moiety of phosphoenolpyruvate (PEP) to the 5-hydroxyl of shikimate-3-phosphate (S3P) to produce enolpyruvyl shikimate-3-phosphate and inorganic phosphate. In Yersinia pestis bv. Antiqua (strain Antiqua), this protein is 3-phosphoshikimate 1-carboxyvinyltransferase.